The sequence spans 146 residues: Horcolin (146 aa).

The segment at 1–21 is disordered; that stretch reads MSKPVKIGPWGGNGGSERDVQ. The Jacalin-type lectin domain occupies 4-146; that stretch reads PVKIGPWGGN…LDAIGFYITP (143 aa).

Belongs to the jacalin lectin family.

It is found in the secreted. Its subcellular location is the extracellular space. The protein localises to the apoplast. In terms of biological role, mannose-specific lectin. Has a weak agglutinating activity against rabbit erythrocytes. The protein is Horcolin of Hordeum vulgare (Barley).